A 464-amino-acid polypeptide reads, in one-letter code: Chromosomal replication initiator protein DnaA (464 aa).

The segment at 1-90 is domain I, interacts with DnaA modulators; the sequence is MNNDNTEVLE…KYWQDEDQSI (90 aa). The tract at residues 90–126 is domain II; it reads ICSVDICVVSNQDPNLLVDIKDRVDRGIKGNCDNVSS. The segment at 127-345 is domain III, AAA+ region; that stretch reads PLDPRFTFDN…GALNKVVAHS (219 aa). ATP-binding residues include Gly-173, Gly-175, Lys-176, and Thr-177. The tract at residues 346-464 is domain IV, binds dsDNA; sequence SLVGCSITLD…DINLLNRMLR (119 aa).

Belongs to the DnaA family. In terms of assembly, oligomerizes as a right-handed, spiral filament on DNA at oriC.

The protein localises to the cytoplasm. Its function is as follows. Plays an essential role in the initiation and regulation of chromosomal replication. ATP-DnaA binds to the origin of replication (oriC) to initiate formation of the DNA replication initiation complex once per cell cycle. Binds the DnaA box (a 9 base pair repeat at the origin) and separates the double-stranded (ds)DNA. Forms a right-handed helical filament on oriC DNA; dsDNA binds to the exterior of the filament while single-stranded (ss)DNA is stabiized in the filament's interior. The ATP-DnaA-oriC complex binds and stabilizes one strand of the AT-rich DNA unwinding element (DUE), permitting loading of DNA polymerase. After initiation quickly degrades to an ADP-DnaA complex that is not apt for DNA replication. Binds acidic phospholipids. This chain is Chromosomal replication initiator protein DnaA, found in Ehrlichia ruminantium (strain Gardel).